The primary structure comprises 324 residues: dITP/XTP pyrophosphatase (324 aa).

A unknown region spans residues 1–126 (MTKSIFEYKD…SDNKSDFGDV (126 aa)). The tract at residues 127–324 (LLIATRNEGK…EVFPAWQNKQ (198 aa)) is NTP pyrophosphatase. Residue 131–136 (TRNEGK) participates in substrate binding. Catalysis depends on D193, which acts as the Proton acceptor. A Mg(2+)-binding site is contributed by D193. Residues S194, 277–280 (FGYD), K300, and 305–306 (HR) contribute to the substrate site.

This sequence belongs to the HAM1 NTPase family. As to quaternary structure, homodimer. It depends on Mg(2+) as a cofactor.

The enzyme catalyses XTP + H2O = XMP + diphosphate + H(+). It catalyses the reaction dITP + H2O = dIMP + diphosphate + H(+). The catalysed reaction is ITP + H2O = IMP + diphosphate + H(+). In terms of biological role, pyrophosphatase that catalyzes the hydrolysis of nucleoside triphosphates to their monophosphate derivatives, with a high preference for the non-canonical purine nucleotides XTP (xanthosine triphosphate), dITP (deoxyinosine triphosphate) and ITP. Seems to function as a house-cleaning enzyme that removes non-canonical purine nucleotides from the nucleotide pool, thus preventing their incorporation into DNA/RNA and avoiding chromosomal lesions. The chain is dITP/XTP pyrophosphatase from Streptococcus thermophilus (strain ATCC BAA-250 / LMG 18311).